The primary structure comprises 155 residues: Ribonuclease H (155 aa).

Residues 9–150 enclose the RNase H type-1 domain; the sequence is DGQQVEMWTD…ADALANQGME (142 aa). Mg(2+)-binding residues include D18, E56, D78, and D142.

Belongs to the RNase H family. In terms of assembly, monomer. The cofactor is Mg(2+).

The protein resides in the cytoplasm. It carries out the reaction Endonucleolytic cleavage to 5'-phosphomonoester.. In terms of biological role, endonuclease that specifically degrades the RNA of RNA-DNA hybrids. The polypeptide is Ribonuclease H (Bordetella pertussis (strain Tohama I / ATCC BAA-589 / NCTC 13251)).